We begin with the raw amino-acid sequence, 1011 residues long: MLLPLFHQQPLILAKTFPDRIFPPFLVPNTLVSRRNVSRANSGIFCSSASGRKTLPQSAIQRIAEKLRSLGFVEEKHDSPTRRITGEESGKNSPGEIFVPLPKQLPIHRVGHTIDTSWSTPSYPVPKPGSGTAISRYHELKRVWKKETEMERKKEEKVPSLAELTLPPAELRRLRTVGIRLTKKLKIGKAGITEGIVNGIHERWRTTEVVKIFCEDISRMNMKRTHDVLETKTGGLVIWRSGSKILLYRGVNYQYPYFVSDRDLAHEAASGASSMDQGVVDSREKQSIAESSAPSITNKMVKPMLTQGVGSPDKVRFQLPGEVQLVEEADRLLEGLGPRFTDWWAYDPLPVDGDLLPAVVPDYRRPFRLLPYGVSPKLTDDEMTTIRRLGRPLPCHFALGRNRNLQGLAVAIVKLWEKCELAKIAVKRGVQNTNSELMAEELKWLTGGTLISRDKDFIVLYRGKDFLPSAVSSAIEERRRQTMIMENSSVHGNKLTENEEEIKPRAVKEDIELEAKDQKDHIQTHQMKSRQRNSPEAILEKTSMKLSMALEKKANAEKVLADLENRESPQLSDIDKEGITNDEKYMLRKIGLKMKPFLLLGRRGVFDGTIENMHLHWKYRELVKIICNEYSIEAAHKVAEILEAESGGILVAVEMVSKGYAIIVYRGKNYERPQCLRPQTLLSKREALKRSVEAQRRKSLKLHVLKLSNNIEELNRQLVEDSATNETWSDGESSNMMVEEETENQHTEPEKAREKIELGYSSDLSVPSSGEENWEDDSEGEVDPLTTSSQEYQEDESESASSQRHEGNSLDSTANLSVFAETGSANASSFHDRSLPHNSFLNANRKLPGSSTGSGSQISALRERKSENDGLVTDLSNRERLILRKQALKMKKRPPFAVGRSNVVTGLARTLKMHFQKNPLAIVNVKGRANGTSVQEVIAKLKEETGALLVSQEPSKVILYRGWGAEEEMKSFYPNNNVKSSINLPSTRSFVDDPPHVSPALIEAIRLECGL.

The N-terminal 45 residues, 1–45, are a transit peptide targeting the chloroplast; that stretch reads MLLPLFHQQPLILAKTFPDRIFPPFLVPNTLVSRRNVSRANSGIF. The span at 77 to 90 shows a compositional bias: basic and acidic residues; that stretch reads HDSPTRRITGEESG. Positions 77–96 are disordered; it reads HDSPTRRITGEESGKNSPGE. CRM domains follow at residues 164–260, 376–473, and 577–677; these read LTLP…YFVS, PKLT…AVSS, and EGIT…QCLR. 2 disordered regions span residues 721-810 and 841-872; these read DSAT…GNSL and LNAN…DGLV. Positions 722-736 are enriched in polar residues; it reads SATNETWSDGESSNM. A compositionally biased stretch (basic and acidic residues) spans 743–757; the sequence is ENQHTEPEKAREKIE. Polar residues predominate over residues 762 to 771; it reads SDLSVPSSGE. Over residues 772–782 the composition is skewed to acidic residues; sequence ENWEDDSEGEV. Over residues 849–859 the composition is skewed to polar residues; it reads GSSTGSGSQIS. The 100-residue stretch at 873-972 folds into the CRM 4 domain; sequence TDLSNRERLI…WGAEEEMKSF (100 aa).

Interacts with RNA. Part of large ribonucleo-protein particles that contain CAF1 and/or CAF2.

Its subcellular location is the plastid. The protein localises to the chloroplast stroma. In terms of biological role, binds specific group II introns in chloroplasts and facilitates their splicing. Acts on both subgroup IIA and subgroup IIB introns. The substrates of the subgroup IIB also require the CRM domain proteins CAF1 or CAF2, with a simultaneous binding of CFM2 and CAF1 or CAF2. Can bind to and promote the splicing of the single group I intron in chloroplast tRNA transcript of trnL-UAA gene. This chain is CRM-domain containing factor CFM2, chloroplastic, found in Arabidopsis thaliana (Mouse-ear cress).